Consider the following 594-residue polypeptide: CRISPR-associated DNA-binding protein Cas12m (594 aa).

The segment at 1-85 is recognition domain (REC1-N); sequence MSRLEARTRY…EKVRQVMVFE (85 aa). The interval 86 to 153 is recognition domain (REC2); it reads SETTKKIKEL…ERSFIFEARK (68 aa). The recognition domain (REC1-C) stretch occupies residues 154–211; that stretch reads QELAQLEKERWAVVKELGKGSGLYWCNLEDVVNSYDIGRKKAKAAGGEMRFHRWDGTG. The segment at 212–314 is wedge domain (WED); that stretch reads KVTVRFQKGL…RYKLNLVLEI (103 aa). Positions 315–329 are linker; sequence LGENTNRILPALEGT. The interval 330-540 is ruvC-I; it reads AAIDLGWRTV…KNHVEFTYVP (211 aa). The target nucleic-acid binding (TNB) stretch occupies residues 541-575; the sequence is AENTTITCHKCGHKEKFDAAAQIIHTCSTCGELWD. Zn(2+) is bound by residues Cys-548, Cys-551, Cys-567, and Cys-570. The segment at 576-594 is ruvC-II; that stretch reads QDYNAAKNLLAFSQKGGVK. Asp-577 is a binding site for Mg(2+).

It belongs to the CRISPR-associated DNA-binding protein Cas12m family. Mg(2+) serves as cofactor. The cofactor is Zn(2+).

Its function is as follows. CRISPR (clustered regularly interspaced short palindromic repeat), is an adaptive immune system that provides protection against mobile genetic elements (viruses, transposable elements and conjugative plasmids). CRISPR clusters contain sequences complementary to antecedent mobile elements and target invading nucleic acids. CRISPR clusters are transcribed and processed into CRISPR RNA (crRNA). Recognizes a short motif in the CRISPR repeat sequences (the 5' PAM or protospacer adjacent motif, 5'-C/TCN-3' in this organism) to help distinguish self versus nonself, as targets within the bacterial CRISPR locus do not have PAMs. Upon expression in E.coli as a CRISPR locus inhibits plasmid propagation when targeted to regions essential for plasmid propagation (replication origin but not a selectable marker), probably by inhibiting transcription. Cas12m-crRNA binds DNA in a PAM-dependent, crRNA-guided fashion. Upon expression in E.coli as a CRISPR region preferentially binds to its associated crRNA. Probably required for pre-crRNA processing to mature crRNA. The polypeptide is CRISPR-associated DNA-binding protein Cas12m (Thermanaerosceptrum fracticalcis).